The chain runs to 303 residues: Taste receptor type 2 member 13 (303 aa).

Residues 1 to 7 (MESALPS) are Extracellular-facing. Residues 8–28 (IFTLVIIAEFIIGNLSNGFIV) form a helical membrane-spanning segment. At 29–55 (LINCIDWVSKRELSSVDKLLIILAISR) the chain is on the cytoplasmic side. A helical membrane pass occupies residues 56-76 (IGLIWEILVSWFLALHYLAIF). Topologically, residues 77–85 (VSGTGLRIM) are extracellular. The chain crosses the membrane as a helical span at residues 86-106 (IFSWIVSNHFNLWLATIFSIF). Residues 107–128 (YLLKIASFSSPAFLYLKWRVNK) are Cytoplasmic-facing. A helical transmembrane segment spans residues 129 to 149 (VILMILLGTLVFLFLNLIQIN). Residues 150–184 (MHIKDWLDRYERNTTWNFSMSDFETFSVSVKFTMT) are Extracellular-facing. N-linked (GlcNAc...) asparagine glycosylation is found at Asn-162 and Asn-166. A helical membrane pass occupies residues 185-205 (MFSLTPFTVAFISFLLLIFSL). The Cytoplasmic portion of the chain corresponds to 206-232 (QKHLQKMQLNYKGHRDPRTKVHTNALK). Residues 233–253 (IVISFLLFYASFFLCVLISWI) form a helical membrane-spanning segment. Residues 254–261 (SELYQNTV) lie on the Extracellular side of the membrane. The helical transmembrane segment at 262–282 (IYMLCETIGVFSPSSHSFLLI) threads the bilayer. Topologically, residues 283–303 (LGNAKLRQAFLLVAAKVWAKR) are cytoplasmic.

Belongs to the G-protein coupled receptor T2R family. In terms of tissue distribution, expressed in subsets of taste receptor cells of the tongue and palate epithelium and exclusively in gustducin-positive cells.

Its subcellular location is the membrane. Functionally, receptor that may play a role in the perception of bitterness and is gustducin-linked. May play a role in sensing the chemical composition of the gastrointestinal content. The activity of this receptor may stimulate alpha gustducin, mediate PLC-beta-2 activation and lead to the gating of TRPM5. This is Taste receptor type 2 member 13 (TAS2R13) from Homo sapiens (Human).